Consider the following 555-residue polypeptide: MDSDEGYNYEFDEDEECSEEDSGAEEEEDEDDDEPDDDNLDLGEVELVEPGLGVGGERDGLLCGETGGGGGSALGPGGGGGGGGGGGGPGHEQEEDYRYEVLTAEQILQHMVECIREVNEVIQNPATITRILLSHFNWDKEKLMERYFDGNLEKLFAECHVINPSKKSRTRQMNTRSSAQDMPCQICYLNYPNSYFTGLECGHKFCMQCWSEYLTTKIMEEGMGQTISCPAHGCDILVDDNTVMRLITDSKVKLKYQHLITNSFVECNRLLKWCPAPDCHHVVKVQYPDAKPVRCKCGRQFCFNCGENWHDPVKCKWLKKWIKKCDDDSETSNWIAANTKECPKCHVTIEKDGGCNHMVCRNQNCKAEFCWVCLGPWEPHGSAWYNCNRYNEDDAKAARDAQERSRAALQRYLFYCNRYMNHMQSLRFEHKLYAQVKQKMEEMQQHNMSWIEVQFLKKAVDVLCQCRATLMYTYVFAFYLKKNNQSIIFENNQADLENATEVLSGYLERDISQDSLQDIKQKVQDKYRYCESRRRVLLQHVHEGYEKDLWEYIED.

The segment covering Met1 to Leu47 has biased composition (acidic residues). The tract at residues Met1–Gln93 is disordered. The segment covering Glu65–Gly90 has biased composition (gly residues). Residues Thr103 to Asn151 are UBA-like. At Lys140 the chain carries N6-acetyllysine. The segment at Gln180–Asn391 is TRIAD supradomain. The Zn(2+) site is built by Cys184, Cys187, Cys201, His203, Cys206, Cys209, Cys229, Cys234, Cys274, Cys279, Cys295, Cys297, Cys302, Cys305, His310, Cys315, Cys342, and Cys345. The RING-type 1 zinc finger occupies Cys184 to Cys234. The IBR-type zinc-finger motif lies at Leu254–Cys315. The RING-type 2; atypical zinc-finger motif lies at Cys342–Cys373. Residue Cys355 is part of the active site. Zn(2+) contacts are provided by Cys360, Cys365, Cys370, Cys373, His380, and Cys387. The interval Arg406–Asp555 is ariadne domain.

The protein belongs to the RBR family. Ariadne subfamily. Interacts (via the first RING-type zinc finger) with UBE2L3. Associates with cullin-RING ubiquitin ligase (CRL) complexes containing CUL1, CUL2 and CUL3. Interacts with neddylated CUL1. Interacts with neddylated CUL2. Interacts with neddylated CUL3. Interacts with neddylated CUL4A.

It localises to the cytoplasm. It is found in the nucleus. Its subcellular location is the cajal body. It carries out the reaction [E2 ubiquitin-conjugating enzyme]-S-ubiquitinyl-L-cysteine + [acceptor protein]-L-lysine = [E2 ubiquitin-conjugating enzyme]-L-cysteine + [acceptor protein]-N(6)-ubiquitinyl-L-lysine.. The protein operates within protein modification; protein ubiquitination. Its activity is regulated as follows. Autoinhibited by the ariadne domain, which masks the second RING-type zinc finger that contains the active site and inhibits the E3 activity. Inhibition is relieved upon binding to neddylated cullin-RING ubiquitin ligase complexes, which activate the E3 ligase activity of ARIH1. In terms of biological role, E3 ubiquitin-protein ligase, which catalyzes ubiquitination of target proteins together with ubiquitin-conjugating enzyme E2 UBE2L3. Acts as an atypical E3 ubiquitin-protein ligase by working together with cullin-RING ubiquitin ligase (CRL) complexes and initiating ubiquitination of CRL substrates: associates with CRL complexes and specifically mediates addition of the first ubiquitin on CRLs targets. The initial ubiquitin is then elongated by CDC34/UBE2R1 and UBE2R2. E3 ubiquitin-protein ligase activity is activated upon binding to neddylated cullin-RING ubiquitin ligase complexes. Plays a role in protein translation in response to DNA damage by mediating ubiquitination of EIF4E2, the consequences of EIF4E2 ubiquitination are however unclear. According to a report, EIF4E2 ubiquitination leads to promote EIF4E2 cap-binding and protein translation arrest. According to another report EIF4E2 ubiquitination leads to its subsequent degradation. Acts as the ligase involved in ISGylation of EIF4E2. In vitro, controls the degradation of the LINC (LInker of Nucleoskeleton and Cytoskeleton) complex member SUN2 and may therefore have a role in the formation and localization of the LINC complex, and as a consequence, may act in nuclear subcellular localization and nuclear morphology. The protein is E3 ubiquitin-protein ligase ARIH1 (ARIH1) of Bos taurus (Bovine).